A 172-amino-acid polypeptide reads, in one-letter code: NADH-quinone oxidoreductase subunit B (172 aa).

Residues C46, C47, C111, and C141 each coordinate [4Fe-4S] cluster.

This sequence belongs to the complex I 20 kDa subunit family. As to quaternary structure, NDH-1 is composed of 14 different subunits. Subunits NuoB, C, D, E, F, and G constitute the peripheral sector of the complex. The cofactor is [4Fe-4S] cluster.

It localises to the cell membrane. It catalyses the reaction a quinone + NADH + 5 H(+)(in) = a quinol + NAD(+) + 4 H(+)(out). NDH-1 shuttles electrons from NADH, via FMN and iron-sulfur (Fe-S) centers, to quinones in the respiratory chain. The immediate electron acceptor for the enzyme in this species is believed to be a menaquinone. Couples the redox reaction to proton translocation (for every two electrons transferred, four hydrogen ions are translocated across the cytoplasmic membrane), and thus conserves the redox energy in a proton gradient. This is NADH-quinone oxidoreductase subunit B from Brevibacillus brevis (strain 47 / JCM 6285 / NBRC 100599).